The primary structure comprises 286 residues: MIIRFDNVSYTYQKGTPYQHQAIHDVNTEFEQGKYYAIVGQTGSGKSTLIQNINALLKPTTGTVTVDDITITHKTKDKYIRPVRKRIGMVFQFPESQLFEDTVEREMIFGPKNFKMNLDEAKNYAHRLLMDLGFSRDVMSQSPFQMSGGQMRKIAIVSILAMNPDIIVVDEPTAGLDPQSKRQVMRLLKSLQTDENKTIILISHDMNEVARYADEVIVMKEGSIVSQTSPKELFKDKEKLADWHIGLPEIVQLQYDFEQKHQTKLKDIALTEEAFVSLYKEWQHEK.

The ABC transporter domain occupies 3–246 (IRFDNVSYTY…KEKLADWHIG (244 aa)). An ATP-binding site is contributed by 40–47 (GQTGSGKS).

It belongs to the ABC transporter superfamily. Energy-coupling factor EcfA family. Forms a stable energy-coupling factor (ECF) transporter complex composed of 2 membrane-embedded substrate-binding proteins (S component), 2 ATP-binding proteins (A component) and 2 transmembrane proteins (T component).

The protein localises to the cell membrane. In terms of biological role, ATP-binding (A) component of a common energy-coupling factor (ECF) ABC-transporter complex. Unlike classic ABC transporters this ECF transporter provides the energy necessary to transport a number of different substrates. The sequence is that of Energy-coupling factor transporter ATP-binding protein EcfA2 from Staphylococcus aureus (strain MRSA252).